A 240-amino-acid chain; its full sequence is Ribonuclease HII (240 aa).

An RNase H type-2 domain is found at 31–222 (RLIAGVDEAG…VRRALGLETA (192 aa)). Residues Asp-37, Glu-38, and Asp-130 each contribute to the a divalent metal cation site.

It belongs to the RNase HII family. Requires Mn(2+) as cofactor. The cofactor is Mg(2+).

The protein resides in the cytoplasm. The enzyme catalyses Endonucleolytic cleavage to 5'-phosphomonoester.. In terms of biological role, endonuclease that specifically degrades the RNA of RNA-DNA hybrids. This chain is Ribonuclease HII, found in Xanthomonas campestris pv. campestris (strain 8004).